Reading from the N-terminus, the 619-residue chain is 1-deoxy-D-xylulose-5-phosphate synthase (619 aa).

Thiamine diphosphate-binding positions include His80 and Gly121–Ser123. Asp152 lines the Mg(2+) pocket. Residues Gly153–Ala154, Asn181, Tyr288, and Glu370 contribute to the thiamine diphosphate site. A Mg(2+)-binding site is contributed by Asn181.

Belongs to the transketolase family. DXPS subfamily. Homodimer. Mg(2+) serves as cofactor. It depends on thiamine diphosphate as a cofactor.

The catalysed reaction is D-glyceraldehyde 3-phosphate + pyruvate + H(+) = 1-deoxy-D-xylulose 5-phosphate + CO2. It functions in the pathway metabolic intermediate biosynthesis; 1-deoxy-D-xylulose 5-phosphate biosynthesis; 1-deoxy-D-xylulose 5-phosphate from D-glyceraldehyde 3-phosphate and pyruvate: step 1/1. Its function is as follows. Catalyzes the acyloin condensation reaction between C atoms 2 and 3 of pyruvate and glyceraldehyde 3-phosphate to yield 1-deoxy-D-xylulose-5-phosphate (DXP). The chain is 1-deoxy-D-xylulose-5-phosphate synthase from Yersinia pseudotuberculosis serotype I (strain IP32953).